We begin with the raw amino-acid sequence, 155 residues long: UPF0178 protein RHE_CH02229 (155 aa).

This sequence belongs to the UPF0178 family.

The sequence is that of UPF0178 protein RHE_CH02229 from Rhizobium etli (strain ATCC 51251 / DSM 11541 / JCM 21823 / NBRC 15573 / CFN 42).